The sequence spans 532 residues: UDP-N-acetylmuramyl-tripeptide synthetase (532 aa).

Ser34 serves as a coordination point for UDP-N-acetyl-alpha-D-muramoyl-L-alanyl-D-glutamate. 127–133 (GTEGKSS) lines the ATP pocket. Residues 171–172 (TT), Ser198, and Arg208 contribute to the UDP-N-acetyl-alpha-D-muramoyl-L-alanyl-D-glutamate site. The residue at position 240 (Lys240) is an N6-carboxylysine.

Belongs to the MurCDEF family. MurE subfamily. Carboxylation is probably crucial for Mg(2+) binding and, consequently, for the gamma-phosphate positioning of ATP.

The protein localises to the cytoplasm. It participates in cell wall biogenesis; peptidoglycan biosynthesis. In terms of biological role, catalyzes the addition of an amino acid to the nucleotide precursor UDP-N-acetylmuramoyl-L-alanyl-D-glutamate (UMAG) in the biosynthesis of bacterial cell-wall peptidoglycan. This Treponema denticola (strain ATCC 35405 / DSM 14222 / CIP 103919 / JCM 8153 / KCTC 15104) protein is UDP-N-acetylmuramyl-tripeptide synthetase.